The primary structure comprises 244 residues: Membrane-spanning 4-domains subfamily A member 6B (244 aa).

Residues 1 to 46 lie on the Cytoplasmic side of the membrane; sequence MIPQVVTSETVAMISPNGMSLPQTDKPQPFHQWQDSLKKHLKAEIK. Residues 47–67 form a helical membrane-spanning segment; the sequence is VMAAIQIMCAVMVLSLGIILA. Over 68-84 the chain is Extracellular; that stretch reads SVPSNLHFTSVFSVLLK. The helical transmembrane segment at 85–105 threads the bilayer; it reads SGYPFIGALFFIVSGILSIVT. Topologically, residues 106-121 are cytoplasmic; that stretch reads ETKSTKILVDSSLTLN. Residues 122 to 142 traverse the membrane as a helical segment; it reads ILSVSFAFMGIIIISVSLAGL. Over 143–176 the chain is Extracellular; the sequence is HPASEQCLQSKELRPTEYHYYQFLDRNECFAAKS. The helical transmembrane segment at 177–197 threads the bilayer; the sequence is VLAGVFSLMLISTMLELGLAV. At 198–244 the chain is on the cytoplasmic side; it reads LTAMLWWKQSHSNIPGNVMFLPHSSNNDSNMESKVLCNPSYEEQLVC.

It belongs to the MS4A family. In terms of tissue distribution, expressed at high levels in thymus, spleen, and peripheral lymph nodes, with less abundant levels in non-lymphoid tissues.

The protein resides in the membrane. Its function is as follows. May be involved in signal transduction as a component of a multimeric receptor complex. The sequence is that of Membrane-spanning 4-domains subfamily A member 6B (Ms4a6b) from Mus musculus (Mouse).